Reading from the N-terminus, the 39-residue chain is Pro-opiomelanocortin (39 aa).

Position 1 is an N-acetylserine (Ser1). Val13 carries the post-translational modification Valine amide. Ser31 is subject to Phosphoserine.

It belongs to the POMC family. In terms of tissue distribution, expressed in the pituitary gland.

It is found in the secreted. Its function is as follows. Precursor protein for pituitary hormones that regulate stress and environmental adaptation. Stimulates the adrenal glands to release cortisol. Functionally, anorexigenic peptide. Increases the pigmentation of skin by increasing melanin production in melanocytes. The chain is Pro-opiomelanocortin (POMC) from Oryctolagus cuniculus (Rabbit).